Here is a 93-residue protein sequence, read N- to C-terminus: MGLLDYFRGSRTDSAAVAKERLQILVAHERAERNKPDYLPLLQKELLEVIRKYVNVGQDAITVTMEKDDNREVLELNVVLPDAIESRPKRKRG.

This sequence belongs to the MinE family.

In terms of biological role, prevents the cell division inhibition by proteins MinC and MinD at internal division sites while permitting inhibition at polar sites. This ensures cell division at the proper site by restricting the formation of a division septum at the midpoint of the long axis of the cell. The protein is Cell division topological specificity factor of Methylococcus capsulatus (strain ATCC 33009 / NCIMB 11132 / Bath).